We begin with the raw amino-acid sequence, 178 residues long: Large ribosomal subunit protein uL5 (178 aa).

It belongs to the universal ribosomal protein uL5 family. In terms of assembly, part of the 50S ribosomal subunit; part of the 5S rRNA/L5/L18/L25 subcomplex. Contacts the 5S rRNA and the P site tRNA. Forms a bridge to the 30S subunit in the 70S ribosome.

Its function is as follows. This is one of the proteins that bind and probably mediate the attachment of the 5S RNA into the large ribosomal subunit, where it forms part of the central protuberance. In the 70S ribosome it contacts protein S13 of the 30S subunit (bridge B1b), connecting the 2 subunits; this bridge is implicated in subunit movement. Contacts the P site tRNA; the 5S rRNA and some of its associated proteins might help stabilize positioning of ribosome-bound tRNAs. The protein is Large ribosomal subunit protein uL5 of Psychrobacter arcticus (strain DSM 17307 / VKM B-2377 / 273-4).